Here is a 263-residue protein sequence, read N- to C-terminus: Shikimate dehydrogenase (NADP(+)) (263 aa).

Shikimate-binding positions include Ser16 to Ser18 and Thr65. Residue Lys69 is the Proton acceptor of the active site. Residues Asn90 and Asp105 each contribute to the shikimate site. Residues Gly125–Ser129 and Leu208 contribute to the NADP(+) site. Tyr210 provides a ligand contact to shikimate. Gly230 lines the NADP(+) pocket.

It belongs to the shikimate dehydrogenase family. Homodimer.

The catalysed reaction is shikimate + NADP(+) = 3-dehydroshikimate + NADPH + H(+). The protein operates within metabolic intermediate biosynthesis; chorismate biosynthesis; chorismate from D-erythrose 4-phosphate and phosphoenolpyruvate: step 4/7. Involved in the biosynthesis of the chorismate, which leads to the biosynthesis of aromatic amino acids. Catalyzes the reversible NADPH linked reduction of 3-dehydroshikimate (DHSA) to yield shikimate (SA). This chain is Shikimate dehydrogenase (NADP(+)), found in Helicobacter pylori (strain G27).